Reading from the N-terminus, the 223-residue chain is Nicotinamide/nicotinic acid mononucleotide adenylyltransferase 2 (223 aa).

Residues Ser-11 and Phe-12 each coordinate NAD(+). Residue His-19 participates in ATP binding. NAD(+) contacts are provided by Trp-87, Thr-90, Gly-116, Asp-118, Leu-133, Trp-134, and Arg-153. 190–191 (TR) contacts ATP.

It belongs to the eukaryotic NMN adenylyltransferase family. Requires a divalent metal cation as cofactor.

The enzyme catalyses beta-nicotinamide D-ribonucleotide + ATP + H(+) = diphosphate + NAD(+). It catalyses the reaction nicotinate beta-D-ribonucleotide + ATP + H(+) = deamido-NAD(+) + diphosphate. It functions in the pathway cofactor biosynthesis; NAD(+) biosynthesis; deamido-NAD(+) from nicotinate D-ribonucleotide: step 1/1. Its pathway is cofactor biosynthesis; NAD(+) biosynthesis; NAD(+) from nicotinamide D-ribonucleotide: step 1/1. In terms of biological role, catalyzes the formation of NAD(+) from nicotinamide mononucleotide (NMN) and ATP. Can also use the deamidated form; nicotinic acid mononucleotide (NaMN) as substrate. This is Nicotinamide/nicotinic acid mononucleotide adenylyltransferase 2 from Caenorhabditis elegans.